Here is a 204-residue protein sequence, read N- to C-terminus: Ras-related protein Rab-7L1 (204 aa).

Ser-33, Lys-34, His-35, Tyr-36, Lys-37, and Thr-39 together coordinate GTP. The short motif at 36 to 44 (YKSTVGVDF) is the Effector region element. Thr-71 carries the phosphothreonine; by LRRK2 modification. Ser-72 bears the Phosphoserine mark. GTP-binding residues include Lys-126, Val-156, and Lys-157. S-geranylgeranyl cysteine attachment occurs at residues Cys-203 and Cys-204.

The protein belongs to the small GTPase superfamily. Rab family. As to quaternary structure, interacts with LRRK2 (via the N-terminus); this interaction is direct and stimulates kinase activity.

The protein resides in the cell membrane. The protein localises to the cytoplasm. It is found in the perinuclear region. It localises to the golgi apparatus. Its subcellular location is the golgi apparatus membrane. The protein resides in the trans-Golgi network. The protein localises to the cytoskeleton. Functionally, the small GTPases Rab are key regulators in vesicle trafficking. Essential for maintaining the integrity of endosome-trans-Golgi network structure. Together with LRRK2, plays a role in the retrograde trafficking pathway for recycling proteins, such as mannose 6 phosphate receptor (M6PR), between lysosomes and the Golgi apparatus in a retromer-dependent manner. Recruits LRRK2 to the Golgi apparatus and stimulates LRRK2 kinase activity. Stimulates phosphorylation of RAB10 'Thr-73' by LRRK2. Also regulates neuronal process morphology in the intact central nervous system (CNS). This chain is Ras-related protein Rab-7L1 (Rab29), found in Mus musculus (Mouse).